A 318-amino-acid polypeptide reads, in one-letter code: Ornithine carbamoyltransferase (318 aa).

Residues 63–66 (STRT), Gln-90, Arg-114, and 141–144 (HPCQ) each bind carbamoyl phosphate. Residues Asn-172, Asp-235, and 239–240 (SM) contribute to the L-ornithine site. Carbamoyl phosphate is bound by residues 275-276 (CL) and Arg-303.

The protein belongs to the aspartate/ornithine carbamoyltransferase superfamily. OTCase family.

Its subcellular location is the cytoplasm. It carries out the reaction carbamoyl phosphate + L-ornithine = L-citrulline + phosphate + H(+). The protein operates within amino-acid biosynthesis; L-arginine biosynthesis; L-arginine from L-ornithine and carbamoyl phosphate: step 1/3. Functionally, reversibly catalyzes the transfer of the carbamoyl group from carbamoyl phosphate (CP) to the N(epsilon) atom of ornithine (ORN) to produce L-citrulline. The protein is Ornithine carbamoyltransferase of Prochlorococcus marinus (strain MIT 9313).